Consider the following 536-residue polypeptide: Carboxypeptidase Y homolog A (536 aa).

Residues 1–17 (MKFFTTGLLATAALAAA) form the signal peptide. Positions 18-124 (QEQQVLQAED…KLHNYDLRVK (107 aa)) are excised as a propeptide. Cystine bridges form between Cys172/Cys412, Cys306/Cys320, Cys330/Cys353, Cys337/Cys346, and Cys375/Cys382. Asn203 is a glycosylation site (N-linked (GlcNAc...) asparagine). Residue Ser259 is part of the active site. Residue Asp451 is part of the active site. Asn502 carries an N-linked (GlcNAc...) asparagine glycan. Residue His513 is part of the active site.

Belongs to the peptidase S10 family.

Its subcellular location is the vacuole. It carries out the reaction Release of a C-terminal amino acid with broad specificity.. In terms of biological role, vacuolar carboxypeptidase involved in degradation of small peptides. Digests preferentially peptides containing an aliphatic or hydrophobic residue in P1' position, as well as methionine, leucine or phenylalanine in P1 position of ester substrate. This chain is Carboxypeptidase Y homolog A (cpyA), found in Trichophyton rubrum (Athlete's foot fungus).